A 146-amino-acid chain; its full sequence is Hemoglobin subunit beta (146 aa).

Val1 carries the N-acetylvaline modification. Residues 2-146 enclose the Globin domain; sequence HLTPEEKTAV…VANALAHKYH (145 aa). Thr12 is modified (phosphothreonine). The residue at position 44 (Ser44) is a Phosphoserine. Lys59 is modified (N6-acetyllysine). His63 is a binding site for heme b. Position 82 is an N6-acetyllysine (Lys82). Residue His92 participates in heme b binding. Cys93 is subject to S-nitrosocysteine. Position 144 is an N6-acetyllysine (Lys144).

The protein belongs to the globin family. Heterotetramer of two alpha chains and two beta chains. As to expression, red blood cells.

Involved in oxygen transport from the lung to the various peripheral tissues. The chain is Hemoglobin subunit beta (HBB) from Mandrillus sphinx (Mandrill).